A 789-amino-acid chain; its full sequence is GDH/6PGL endoplasmic bifunctional protein (789 aa).

Positions 1–16 (MLLAAMCLALLGCLQA) are cleaved as a signal peptide. A Pyrrolidone carboxylic acid modification is found at Gln17. The interval 17 to 524 (QELKGHVSII…GGQLTFSQQQ (508 aa)) is hexose-6-phosphate dehydrogenase. NADP(+) is bound by residues 29-36 (GATGDLAK) and Tyr146. Asn154 carries an N-linked (GlcNAc...) asparagine glycan. Lys171 serves as a coordination point for NADP(+). D-glucose 6-phosphate-binding positions include Lys171, 201-205 (HYLGK), Glu240, and Asp259. Lys205 is modified (N6-succinyllysine). Catalysis depends on His264, which acts as the Proton acceptor. Asn279 is a glycosylation site (N-linked (GlcNAc...) asparagine). Residues Lys357 and Arg362 each contribute to the D-glucose 6-phosphate site. Arg367 contacts NADP(+). An N6-succinyllysine modification is found at Lys424. Residues 525 to 538 (LEVLIPDLGSVPKP) are linker. The 6-phosphogluconolactonase stretch occupies residues 539–789 (SDFQVLGARY…WYMDYEAFLG (251 aa)). Residue Trp615 coordinates NADP(+). Residue Asn681 is glycosylated (N-linked (GlcNAc...) asparagine).

It in the N-terminal section; belongs to the glucose-6-phosphate dehydrogenase family. The protein in the C-terminal section; belongs to the glucosamine/galactosamine-6-phosphate isomerase family. 6-phosphogluconolactonase subfamily. In terms of assembly, homodimer. Expressed in liver (at protein level). Expressed in muscles. Expressed in adipose tissues.

It is found in the endoplasmic reticulum lumen. It carries out the reaction D-glucose 6-phosphate + NAD(+) = 6-phospho-D-glucono-1,5-lactone + NADH + H(+). The enzyme catalyses D-glucose 6-phosphate + NADP(+) = 6-phospho-D-glucono-1,5-lactone + NADPH + H(+). The catalysed reaction is 6-phospho-D-glucono-1,5-lactone + H2O = 6-phospho-D-gluconate + H(+). It catalyses the reaction 2-deoxy-D-glucose 6-phosphate + NAD(+) = 2-deoxy-6-phospho-D-glucono-1,5-lactone + NADH + H(+). It carries out the reaction 2-deoxy-D-glucose 6-phosphate + NADP(+) = 2-deoxy-6-phospho-D-glucono-1,5-lactone + NADPH + H(+). The enzyme catalyses D-galactose 6-phosphate + NADP(+) = 6-phospho-D-galactono-1,5-lactone + NADPH + H(+). The catalysed reaction is D-galactose 6-phosphate + NAD(+) = 6-phospho-D-galactono-1,5-lactone + NADH + H(+). It catalyses the reaction D-glucosamine 6-phosphate + NADP(+) = 2-amino-2-deoxy-6-phospho-D-glucono-1,5-lactone + NADPH + 2 H(+). It carries out the reaction D-glucose + NAD(+) = D-glucono-1,5-lactone + NADH + H(+). The enzyme catalyses D-glucose + NADP(+) = D-glucono-1,5-lactone + NADPH + H(+). The catalysed reaction is D-glucose 6-sulfate + NADP(+) = 6-sulfo-D-glucono-1,5-lactone + NADPH + H(+). Its pathway is carbohydrate degradation; pentose phosphate pathway; D-ribulose 5-phosphate from D-glucose 6-phosphate (oxidative stage). The protein operates within carbohydrate degradation; pentose phosphate pathway; D-ribulose 5-phosphate from D-glucose 6-phosphate (oxidative stage): step 2/3. Its function is as follows. Bifunctional enzyme localized in the lumen of the endoplasmic reticulum that catalyzes the first two steps of the oxidative branch of the pentose phosphate pathway/shunt, an alternative to glycolysis and a major source of reducing power and metabolic intermediates for biosynthetic processes. Has a hexose-6-phosphate dehydrogenase activity, with broad substrate specificity compared to glucose-6-phosphate 1-dehydrogenase/G6PD, and catalyzes the first step of the pentose phosphate pathway. In addition, acts as a 6-phosphogluconolactonase and catalyzes the second step of the pentose phosphate pathway. May have a dehydrogenase activity for alternative substrates including glucosamine 6-phosphate and glucose 6-sulfate. The main function of this enzyme is to provide reducing equivalents such as NADPH to maintain the adequate levels of reductive cofactors in the oxidizing environment of the endoplasmic reticulum. By producing NADPH that is needed by reductases of the lumen of the endoplasmic reticulum like corticosteroid 11-beta-dehydrogenase isozyme 1/HSD11B1, indirectly regulates their activity. This Mus musculus (Mouse) protein is GDH/6PGL endoplasmic bifunctional protein.